The sequence spans 251 residues: MSGHSKWATIKHAKGAADAKRGQLFTKLSREIIFAAKQGGPSPEGNARLRLAIQKAKDNRMPSDNIERAIKKGSGELEGATVIEIILEGYGPGGVAVLVNGMSDNRNRTVSDVRHMFSKSGGSLAESGAVSWIFETKGVIGVETVGLDTDELSLKAIDMGAEDVNIEEDYMEIYTAMPDMEKVRQQLEAQGVTVDSAEINMIPKNTVKLDEETSLQVLKLLDKLEELDDVQTVSSNADFDPEVVEKYHSQA.

The protein belongs to the TACO1 family.

It localises to the cytoplasm. This chain is Probable transcriptional regulatory protein DET0444, found in Dehalococcoides mccartyi (strain ATCC BAA-2266 / KCTC 15142 / 195) (Dehalococcoides ethenogenes (strain 195)).